We begin with the raw amino-acid sequence, 331 residues long: MTPTLTPPLQWQRRHVLSLQDFTVAELDIVLQTALSFQEVLNRRTKKVPTLQARVVANLFFESSTRTRNSFELAAKRLSADILNFSPGTSALNKGETILDTAKTLWAMGAEFMVIRHRQSGVPHTIAAEMDRLGGQVAVLNAGDGLHEHPSQALLDLFTLCQLYDPRQPRCALLQGKKIVIVGDIRHSRVARSNLYSLKTAGADVHLAGPPTLLPPEFADYGATLHWTLEPALADADIVMTLRLQRERMDQYLIPSLREYHQHFGMTHERLRLCRPDVRVLHPGPVNRGVELSSALLDDPQFSLVNQQVSSGVAVRMALLYLMGTYHGVKP.

Residues R66 and T67 each contribute to the carbamoyl phosphate site. An L-aspartate-binding site is contributed by K94. Carbamoyl phosphate-binding residues include R116, H149, and Q152. Residues R189 and R243 each coordinate L-aspartate. G284 and P285 together coordinate carbamoyl phosphate.

It belongs to the aspartate/ornithine carbamoyltransferase superfamily. ATCase family. In terms of assembly, heterododecamer (2C3:3R2) of six catalytic PyrB chains organized as two trimers (C3), and six regulatory PyrI chains organized as three dimers (R2).

It catalyses the reaction carbamoyl phosphate + L-aspartate = N-carbamoyl-L-aspartate + phosphate + H(+). It functions in the pathway pyrimidine metabolism; UMP biosynthesis via de novo pathway; (S)-dihydroorotate from bicarbonate: step 2/3. Catalyzes the condensation of carbamoyl phosphate and aspartate to form carbamoyl aspartate and inorganic phosphate, the committed step in the de novo pyrimidine nucleotide biosynthesis pathway. This chain is Aspartate carbamoyltransferase catalytic subunit, found in Thermosynechococcus vestitus (strain NIES-2133 / IAM M-273 / BP-1).